The chain runs to 473 residues: Putative protein TIC 214 C-terminal part (473 aa).

The protein belongs to the TIC214 family. Part of the Tic complex.

It is found in the plastid. The protein resides in the chloroplast. In terms of biological role, involved in protein precursor import into chloroplasts. May be part of an intermediate translocation complex acting as a protein-conducting channel at the inner envelope. This is Putative protein TIC 214 C-terminal part from Anthoceros angustus (Hornwort).